Consider the following 689-residue polypeptide: tRNA 5-methylaminomethyl-2-thiouridine biosynthesis bifunctional protein MnmC (689 aa).

A tRNA (mnm(5)s(2)U34)-methyltransferase region spans residues 1 to 245 (MNQRPIQTAT…KREMLTGTLP (245 aa)). An FAD-dependent cmnm(5)s(2)U34 oxidoreductase region spans residues 270–689 (IGGGIVSALT…RSPATQESSR (420 aa)).

This sequence in the N-terminal section; belongs to the methyltransferase superfamily. tRNA (mnm(5)s(2)U34)-methyltransferase family. The protein in the C-terminal section; belongs to the DAO family. The cofactor is FAD.

Its subcellular location is the cytoplasm. The enzyme catalyses 5-aminomethyl-2-thiouridine(34) in tRNA + S-adenosyl-L-methionine = 5-methylaminomethyl-2-thiouridine(34) in tRNA + S-adenosyl-L-homocysteine + H(+). Its function is as follows. Catalyzes the last two steps in the biosynthesis of 5-methylaminomethyl-2-thiouridine (mnm(5)s(2)U) at the wobble position (U34) in tRNA. Catalyzes the FAD-dependent demodification of cmnm(5)s(2)U34 to nm(5)s(2)U34, followed by the transfer of a methyl group from S-adenosyl-L-methionine to nm(5)s(2)U34, to form mnm(5)s(2)U34. The protein is tRNA 5-methylaminomethyl-2-thiouridine biosynthesis bifunctional protein MnmC of Yersinia pseudotuberculosis serotype O:1b (strain IP 31758).